Reading from the N-terminus, the 649-residue chain is Alpha-amylase (649 aa).

E124 serves as the catalytic Nucleophile. D215 (proton donor) is an active-site residue.

The protein belongs to the glycosyl hydrolase 57 family. Homodimer.

The enzyme catalyses Endohydrolysis of (1-&gt;4)-alpha-D-glucosidic linkages in polysaccharides containing three or more (1-&gt;4)-alpha-linked D-glucose units.. Displays a broad range of substrate specificity, with the capacity to hydrolyze carbohydrates as simple as maltotriose. The sequence is that of Alpha-amylase (amyA) from Pyrococcus furiosus (strain ATCC 43587 / DSM 3638 / JCM 8422 / Vc1).